A 294-amino-acid chain; its full sequence is ATP phosphoribosyltransferase (294 aa).

This sequence belongs to the ATP phosphoribosyltransferase family. Long subfamily. The cofactor is Mg(2+).

The protein resides in the cytoplasm. The catalysed reaction is 1-(5-phospho-beta-D-ribosyl)-ATP + diphosphate = 5-phospho-alpha-D-ribose 1-diphosphate + ATP. It participates in amino-acid biosynthesis; L-histidine biosynthesis; L-histidine from 5-phospho-alpha-D-ribose 1-diphosphate: step 1/9. With respect to regulation, feedback inhibited by histidine. In terms of biological role, catalyzes the condensation of ATP and 5-phosphoribose 1-diphosphate to form N'-(5'-phosphoribosyl)-ATP (PR-ATP). Has a crucial role in the pathway because the rate of histidine biosynthesis seems to be controlled primarily by regulation of HisG enzymatic activity. The protein is ATP phosphoribosyltransferase of Chlorobium phaeovibrioides (strain DSM 265 / 1930) (Prosthecochloris vibrioformis (strain DSM 265)).